The following is a 412-amino-acid chain: Peptidase T (412 aa).

Zn(2+) is bound at residue histidine 78. Aspartate 80 is a catalytic residue. Aspartate 140 is a binding site for Zn(2+). Glutamate 173 serves as the catalytic Proton acceptor. Glutamate 174, aspartate 196, and histidine 379 together coordinate Zn(2+).

The protein belongs to the peptidase M20B family. Zn(2+) is required as a cofactor.

It is found in the cytoplasm. The catalysed reaction is Release of the N-terminal residue from a tripeptide.. Functionally, cleaves the N-terminal amino acid of tripeptides. The protein is Peptidase T of Edwardsiella ictaluri (strain 93-146).